A 474-amino-acid chain; its full sequence is Gamma-aminobutyric acid receptor subunit beta-1 (474 aa).

The first 25 residues, 1-25, serve as a signal peptide directing secretion; that stretch reads MWTVQNRESLGLLSFPVMVAMVCCA. The Extracellular portion of the chain corresponds to 26–245; sequence HSSNEPSNMS…SFRLKRNIGY (220 aa). 2 N-linked (GlcNAc...) asparagine glycosylation sites follow: Asn-33 and Asn-105. Tyr-122 contributes to the histamine binding site. Cys-161 and Cys-175 are disulfide-bonded. A glycan (N-linked (GlcNAc...) asparagine) is linked at Asn-174. Residues 181 to 182 and Thr-227 each bind histamine; that span reads SY. Tyr-182 and Thr-227 together coordinate 4-aminobutanoate. The next 3 helical transmembrane spans lie at 246–267, 271–293, and 305–327; these read FILQ…SFWI, ASAA…STHL, and AIDI…YAFV. At 328–451 the chain is on the cytoplasmic side; sequence NYIFFGKGPQ…DLTDVNSIDK (124 aa). The helical transmembrane segment at 452 to 473 threads the bilayer; the sequence is WSRMFFPITFSLFNVVYWLYYV.

The protein belongs to the ligand-gated ion channel (TC 1.A.9) family. Gamma-aminobutyric acid receptor (TC 1.A.9.5) subfamily. GABRB1 sub-subfamily. In terms of assembly, heteropentamer, formed by a combination of alpha (GABRA1-6), beta (GABRB1-3), gamma (GABRG1-3), delta (GABRD), epsilon (GABRE), rho (GABRR1-3), pi (GABRP) and theta (GABRQ) chains, each subunit exhibiting distinct physiological and pharmacological properties. Binds UBQLN1.

It localises to the postsynaptic cell membrane. The protein localises to the cell membrane. The catalysed reaction is chloride(in) = chloride(out). Its activity is regulated as follows. Potentiated by histamine. Functionally, beta subunit of the heteropentameric ligand-gated chloride channel gated by gamma-aminobutyric acid (GABA), a major inhibitory neurotransmitter in the brain. GABA-gated chloride channels, also named GABA(A) receptors (GABAAR), consist of five subunits arranged around a central pore and contain GABA active binding site(s) located at the alpha and beta subunit interface(s). When activated by GABA, GABAARs selectively allow the flow of chloride anions across the cell membrane down their electrochemical gradient. Chloride influx into the postsynaptic neuron following GABAAR opening decreases the neuron ability to generate a new action potential, thereby reducing nerve transmission. Beta-containing GABAARs can simultaneously bind GABA and histamine where histamine binds at the interface of two neighboring beta subunits, which may be involved in the regulation of sleep and wakefulness. This is Gamma-aminobutyric acid receptor subunit beta-1 from Mus musculus (Mouse).